We begin with the raw amino-acid sequence, 1373 residues long: Disease resistance protein RRS1 (1373 aa).

One can recognise a TIR domain in the interval 5–146 (EKDEEFVCIS…EIVRDVYETH (142 aa)). Residues 170–421 (IGIRCVGIWG…LLEGCGFFPH (252 aa)) enclose the NB-ARC domain. 179-186 (GMPGIGKT) contacts ATP. 9 LRR repeats span residues 498-522 (SEEI…AFKN), 535-553 (NPEV…HSLP), 554-575 (NELR…NFDP), 577-598 (HLVE…TKNL), 621-646 (AENL…RLLR), 665-688 (PPNI…TVKP), 742-766 (LPNM…SIQG), 768-793 (PRFL…SLEI), and 831-854 (PRNL…PLSL). The short motif at 988–1005 (RNFHCWAPGKVVPKVRKD) is the Nuclear localization signal element. A DNA-binding region (WRKY) is located at residues 1204–1272 (IPAIDEGDLW…YLSEHNHPRP (69 aa)). Positions 1300–1323 (RVFQNKDEPNKPHLPSSSTPPGNA) are disordered.

As to quaternary structure, interacts with PopP2, a R.solanacearum type III effector.

The protein localises to the nucleus. Functionally, transcription factor. Interacts specifically with the W box (5'-(T)TGAC[CT]-3'), a frequently occurring elicitor-responsive cis-acting element. Also acts as a disease resistance protein involved in resistance to fungal and bacterial pathogens, including R.solanacearum, P.syringae pv. tomato and C.higginsianum. In presence of RPS4, elicites an EDS1-dependent hypersensitive response. This is Disease resistance protein RRS1 from Arabidopsis thaliana (Mouse-ear cress).